We begin with the raw amino-acid sequence, 685 residues long: DNA-directed RNA polymerase subunit beta' (685 aa).

Zn(2+)-binding residues include Cys-69, Cys-71, Cys-87, and Cys-90. Mg(2+) is bound by residues Asp-489, Asp-491, and Asp-493.

It belongs to the RNA polymerase beta' chain family. RpoC1 subfamily. In terms of assembly, in plastids the minimal PEP RNA polymerase catalytic core is composed of four subunits: alpha, beta, beta', and beta''. When a (nuclear-encoded) sigma factor is associated with the core the holoenzyme is formed, which can initiate transcription. The cofactor is Mg(2+). Zn(2+) is required as a cofactor.

Its subcellular location is the plastid. The protein localises to the chloroplast. The catalysed reaction is RNA(n) + a ribonucleoside 5'-triphosphate = RNA(n+1) + diphosphate. Functionally, DNA-dependent RNA polymerase catalyzes the transcription of DNA into RNA using the four ribonucleoside triphosphates as substrates. In Gossypium hirsutum (Upland cotton), this protein is DNA-directed RNA polymerase subunit beta'.